A 595-amino-acid chain; its full sequence is MLQPWSEIAPRLVDVAMGRKPADLVVRNGRWVNVYSGEIVPGADIAIVGGRFAYVGPDAGHTIGEGTKIVDAAGRYLVPGLCDGHMHVESGLVTVTEFARAVIPHGTTTMFVDPHEIANVLGIAGVKLMNDEAQTLPVNIFVQVPSCVPSAPGLENAGATLSAADVREALAWPNIIGLGEMMNFPGVAANDSKMVAEIAATRAAGLTVGGHYASPDLGRAFHAYAAGGPADDHEGTTVEDAIARVRQGMRSMLRLGSAWFDVAAQVKAITERGIDPRNFVLCTDDSHSGTLVSDGHMNRVVRHAISQGLKPITAIQMATLNTAQHFGLERDLGSIAPGRRADLIVTSDLTALPIEIVFVRGRLLAEKGVLVADIPAYDYPASAKNTVKLGKRLAPTDFDICAAGSSEVEVRVIGVIENQAPTKALQRRLPVECGVVQMDRASDVCQIALVERHRATGGVINAFVSGFGYDTHCAMASTVAHDSHHMIVVGTNKADMAQAANRLQEVGGGIVLIAGGRELALVELPVAGLMSDQRAEIVAEKASRLVEAMRACGCKLNNAYMQHSLLALVVIPELRISDVGLIDVTRFESTEVIVR.

The protein belongs to the metallo-dependent hydrolases superfamily. Adenine deaminase family. Mn(2+) is required as a cofactor.

It catalyses the reaction adenine + H2O + H(+) = hypoxanthine + NH4(+). In Rhizobium meliloti (strain 1021) (Ensifer meliloti), this protein is Adenine deaminase 3.